The following is a 242-amino-acid chain: Ribonuclease 3 (242 aa).

Residues Leu-10–Gly-146 form the RNase III domain. A Mg(2+)-binding site is contributed by Glu-59. Asp-63 is an active-site residue. Residues Asp-132 and Glu-135 each contribute to the Mg(2+) site. Glu-135 is an active-site residue. One can recognise a DRBM domain in the interval Asp-172 to Lys-241. Positions Val-216 to Lys-242 are disordered. Over residues Thr-223–Lys-242 the composition is skewed to basic and acidic residues.

Belongs to the ribonuclease III family. In terms of assembly, homodimer. Mg(2+) is required as a cofactor.

It localises to the cytoplasm. It carries out the reaction Endonucleolytic cleavage to 5'-phosphomonoester.. Digests double-stranded RNA. Involved in the processing of primary rRNA transcript to yield the immediate precursors to the large and small rRNAs (23S and 16S). Processes some mRNAs, and tRNAs when they are encoded in the rRNA operon. Processes pre-crRNA and tracrRNA of type II CRISPR loci if present in the organism. This chain is Ribonuclease 3, found in Staphylococcus carnosus (strain TM300).